The primary structure comprises 227 residues: Cytochrome c oxidase subunit 2 (227 aa).

Residues 1 to 14 (MAYPFQLGLQDATS) lie on the Mitochondrial intermembrane side of the membrane. A helical membrane pass occupies residues 15-45 (PIMEELMNFHDHTLMIVFLISSLVLYIISLM). The Mitochondrial matrix segment spans residues 46–59 (LTTKLTHTSTMDAQ). A helical membrane pass occupies residues 60-87 (EVETIWTILPAAILILIALPSLRILYMM). The Mitochondrial intermembrane segment spans residues 88-227 (DEINNPVLTV…YFENWSASMI (140 aa)). Positions 161, 196, 198, 200, 204, and 207 each coordinate Cu cation. A Mg(2+)-binding site is contributed by glutamate 198.

This sequence belongs to the cytochrome c oxidase subunit 2 family. In terms of assembly, component of the cytochrome c oxidase (complex IV, CIV), a multisubunit enzyme composed of 14 subunits. The complex is composed of a catalytic core of 3 subunits MT-CO1, MT-CO2 and MT-CO3, encoded in the mitochondrial DNA, and 11 supernumerary subunits COX4I, COX5A, COX5B, COX6A, COX6B, COX6C, COX7A, COX7B, COX7C, COX8 and NDUFA4, which are encoded in the nuclear genome. The complex exists as a monomer or a dimer and forms supercomplexes (SCs) in the inner mitochondrial membrane with NADH-ubiquinone oxidoreductase (complex I, CI) and ubiquinol-cytochrome c oxidoreductase (cytochrome b-c1 complex, complex III, CIII), resulting in different assemblies (supercomplex SCI(1)III(2)IV(1) and megacomplex MCI(2)III(2)IV(2)). Found in a complex with TMEM177, COA6, COX18, COX20, SCO1 and SCO2. Interacts with TMEM177 in a COX20-dependent manner. Interacts with COX20. Interacts with COX16. Cu cation is required as a cofactor.

It localises to the mitochondrion inner membrane. The catalysed reaction is 4 Fe(II)-[cytochrome c] + O2 + 8 H(+)(in) = 4 Fe(III)-[cytochrome c] + 2 H2O + 4 H(+)(out). Component of the cytochrome c oxidase, the last enzyme in the mitochondrial electron transport chain which drives oxidative phosphorylation. The respiratory chain contains 3 multisubunit complexes succinate dehydrogenase (complex II, CII), ubiquinol-cytochrome c oxidoreductase (cytochrome b-c1 complex, complex III, CIII) and cytochrome c oxidase (complex IV, CIV), that cooperate to transfer electrons derived from NADH and succinate to molecular oxygen, creating an electrochemical gradient over the inner membrane that drives transmembrane transport and the ATP synthase. Cytochrome c oxidase is the component of the respiratory chain that catalyzes the reduction of oxygen to water. Electrons originating from reduced cytochrome c in the intermembrane space (IMS) are transferred via the dinuclear copper A center (CU(A)) of subunit 2 and heme A of subunit 1 to the active site in subunit 1, a binuclear center (BNC) formed by heme A3 and copper B (CU(B)). The BNC reduces molecular oxygen to 2 water molecules using 4 electrons from cytochrome c in the IMS and 4 protons from the mitochondrial matrix. The protein is Cytochrome c oxidase subunit 2 (MT-CO2) of Leggadina forresti (Forrest's mouse).